The primary structure comprises 374 residues: Queuine tRNA-ribosyltransferase (374 aa).

Asp-89 serves as the catalytic Proton acceptor. Substrate-binding positions include 89-93 (DSGGF), Asp-143, Gln-187, and Gly-214. The segment at 245-251 (GVGKPED) is RNA binding. The Nucleophile role is filled by Asp-264. Positions 269 to 273 (TRNAR) are RNA binding; important for wobble base 34 recognition. 4 residues coordinate Zn(2+): Cys-302, Cys-304, Cys-307, and His-333.

It belongs to the queuine tRNA-ribosyltransferase family. Homodimer. Within each dimer, one monomer is responsible for RNA recognition and catalysis, while the other monomer binds to the replacement base PreQ1. The cofactor is Zn(2+).

The enzyme catalyses 7-aminomethyl-7-carbaguanine + guanosine(34) in tRNA = 7-aminomethyl-7-carbaguanosine(34) in tRNA + guanine. The protein operates within tRNA modification; tRNA-queuosine biosynthesis. Its function is as follows. Catalyzes the base-exchange of a guanine (G) residue with the queuine precursor 7-aminomethyl-7-deazaguanine (PreQ1) at position 34 (anticodon wobble position) in tRNAs with GU(N) anticodons (tRNA-Asp, -Asn, -His and -Tyr). Catalysis occurs through a double-displacement mechanism. The nucleophile active site attacks the C1' of nucleotide 34 to detach the guanine base from the RNA, forming a covalent enzyme-RNA intermediate. The proton acceptor active site deprotonates the incoming PreQ1, allowing a nucleophilic attack on the C1' of the ribose to form the product. After dissociation, two additional enzymatic reactions on the tRNA convert PreQ1 to queuine (Q), resulting in the hypermodified nucleoside queuosine (7-(((4,5-cis-dihydroxy-2-cyclopenten-1-yl)amino)methyl)-7-deazaguanosine). In Shewanella frigidimarina (strain NCIMB 400), this protein is Queuine tRNA-ribosyltransferase.